The primary structure comprises 323 residues: MFTSSAAKTGRRRASTAKKSEDELVVDRVPNLIDGSISSGPISTGPDSDQNNKKKLPNPFAPKINNLGKDGQTIEQGSMLENKSRENEGDGGSPECVTPNHTDIGTSLGQVTTKGNECHDKYIGRGSPPNERGGSRPSQERGDSFVAIKYPSMLTTLAVMLNYDIHNLYEFMMAVLNVTKELNDPNVLVERAVFDAMQYSRSRGIGDRESYSMFCYMIHGYASLMRLAEEPWSDGVSSNESEIHIKASDMKKSVGVTLTVKPNSLWVCNKNDFARLICIFTLPDDIIAFLRTDGEDCYGGSNIYVGLDISKPPYIPLRDVEEP.

A disordered region spans residues methionine 1–glycine 142. The segment covering isoleucine 33 to aspartate 49 has biased composition (low complexity). The span at proline 99–glycine 115 shows a compositional bias: polar residues.

The protein resides in the host cytoplasm. In terms of biological role, constituent of viral factories. The sequence is that of Non-structural protein 9 from Rice gall dwarf virus (RGDV).